Consider the following 276-residue polypeptide: Putative pyruvate, phosphate dikinase regulatory protein 2 (276 aa).

146–153 (GVSRTSKT) is a binding site for ADP.

Belongs to the pyruvate, phosphate/water dikinase regulatory protein family. PDRP subfamily.

The enzyme catalyses N(tele)-phospho-L-histidyl/L-threonyl-[pyruvate, phosphate dikinase] + ADP = N(tele)-phospho-L-histidyl/O-phospho-L-threonyl-[pyruvate, phosphate dikinase] + AMP + H(+). It carries out the reaction N(tele)-phospho-L-histidyl/O-phospho-L-threonyl-[pyruvate, phosphate dikinase] + phosphate + H(+) = N(tele)-phospho-L-histidyl/L-threonyl-[pyruvate, phosphate dikinase] + diphosphate. Its function is as follows. Bifunctional serine/threonine kinase and phosphorylase involved in the regulation of the pyruvate, phosphate dikinase (PPDK) by catalyzing its phosphorylation/dephosphorylation. The protein is Putative pyruvate, phosphate dikinase regulatory protein 2 of Enterococcus faecalis (strain ATCC 700802 / V583).